A 68-amino-acid polypeptide reads, in one-letter code: UPF0435 protein SA1696 (68 aa).

The protein belongs to the UPF0435 family.

The chain is UPF0435 protein SA1696 from Staphylococcus aureus (strain N315).